The primary structure comprises 428 residues: Glucose-1-phosphate adenylyltransferase (428 aa).

Alpha-D-glucose 1-phosphate is bound by residues Y114, G179, 194-195, and S212; that span reads EK.

It belongs to the bacterial/plant glucose-1-phosphate adenylyltransferase family. Homotetramer.

The catalysed reaction is alpha-D-glucose 1-phosphate + ATP + H(+) = ADP-alpha-D-glucose + diphosphate. It functions in the pathway glycan biosynthesis; glycogen biosynthesis. Its function is as follows. Involved in the biosynthesis of ADP-glucose, a building block required for the elongation reactions to produce glycogen. Catalyzes the reaction between ATP and alpha-D-glucose 1-phosphate (G1P) to produce pyrophosphate and ADP-Glc. The sequence is that of Glucose-1-phosphate adenylyltransferase from Yersinia pseudotuberculosis serotype O:1b (strain IP 31758).